The primary structure comprises 1101 residues: Protein unc-13 homolog (1101 aa).

The MHD1 domain maps to V663–V804. Residues Q941–L1051 form the MHD2 domain.

It belongs to the unc-13 family. As to expression, expressed in roots, cotyledons, leaves, stems and flowers. Expressed in guard cells and mesophyll cells of leaves.

The protein localises to the cytoplasm. The protein resides in the cell membrane. In terms of biological role, controls the tethering of the proton ATPase AHA1 to the plasma membrane. Is essential for stomatal opening in response to low concentration of carbon dioxide and light. In Arabidopsis thaliana (Mouse-ear cress), this protein is Protein unc-13 homolog.